A 275-amino-acid polypeptide reads, in one-letter code: Phosphonoacetaldehyde hydrolase (275 aa).

D15 serves as the catalytic Nucleophile. Residues D15 and A17 each contribute to the Mg(2+) site. The Schiff-base intermediate with substrate role is filled by K56. D189 is a binding site for Mg(2+).

It belongs to the HAD-like hydrolase superfamily. PhnX family. As to quaternary structure, homodimer. The cofactor is Mg(2+).

It catalyses the reaction phosphonoacetaldehyde + H2O = acetaldehyde + phosphate + H(+). Involved in phosphonate degradation. In Pseudomonas entomophila (strain L48), this protein is Phosphonoacetaldehyde hydrolase.